The following is a 232-amino-acid chain: Ribonuclease 3 (232 aa).

In terms of domain architecture, RNase III spans 5–134; the sequence is QTVLKNHFAI…FLGALLLDKD (130 aa). Mg(2+) is bound at residue E47. Residue D51 is part of the active site. Mg(2+) contacts are provided by D120 and E123. E123 is an active-site residue. In terms of domain architecture, DRBM spans 160-229; it reads DYKTHLQELL…AKNAVEKGLD (70 aa).

The protein belongs to the ribonuclease III family. In terms of assembly, homodimer. It depends on Mg(2+) as a cofactor.

Its subcellular location is the cytoplasm. The catalysed reaction is Endonucleolytic cleavage to 5'-phosphomonoester.. Functionally, digests double-stranded RNA. Involved in the processing of primary rRNA transcript to yield the immediate precursors to the large and small rRNAs (23S and 16S). Processes some mRNAs, and tRNAs when they are encoded in the rRNA operon. Processes pre-crRNA and tracrRNA of type II CRISPR loci if present in the organism. The polypeptide is Ribonuclease 3 (Streptococcus pneumoniae (strain Taiwan19F-14)).